The following is a 156-amino-acid chain: Small ribosomal subunit protein uS7 (156 aa).

It belongs to the universal ribosomal protein uS7 family. In terms of assembly, part of the 30S ribosomal subunit. Contacts proteins S9 and S11.

In terms of biological role, one of the primary rRNA binding proteins, it binds directly to 16S rRNA where it nucleates assembly of the head domain of the 30S subunit. Is located at the subunit interface close to the decoding center, probably blocks exit of the E-site tRNA. This chain is Small ribosomal subunit protein uS7, found in Buchnera aphidicola subsp. Baizongia pistaciae (strain Bp).